The sequence spans 350 residues: Nicotinate-nucleotide--dimethylbenzimidazole phosphoribosyltransferase (350 aa).

The Proton acceptor role is filled by glutamate 317.

This sequence belongs to the CobT family.

The enzyme catalyses 5,6-dimethylbenzimidazole + nicotinate beta-D-ribonucleotide = alpha-ribazole 5'-phosphate + nicotinate + H(+). The protein operates within nucleoside biosynthesis; alpha-ribazole biosynthesis; alpha-ribazole from 5,6-dimethylbenzimidazole: step 1/2. Functionally, catalyzes the synthesis of alpha-ribazole-5'-phosphate from nicotinate mononucleotide (NAMN) and 5,6-dimethylbenzimidazole (DMB). The chain is Nicotinate-nucleotide--dimethylbenzimidazole phosphoribosyltransferase from Shewanella sp. (strain MR-7).